The primary structure comprises 82 residues: Cytochrome b559 subunit alpha (82 aa).

A helical transmembrane segment spans residues 22–36 (IIHAVTLPAIFIAGF). Heme is bound at residue H24.

This sequence belongs to the PsbE/PsbF family. As to quaternary structure, heterodimer of an alpha subunit and a beta subunit. PSII is composed of 1 copy each of membrane proteins PsbA, PsbB, PsbC, PsbD, PsbE, PsbF, PsbH, PsbI, PsbJ, PsbK, PsbL, PsbM, PsbT, PsbX, PsbY, Psb30/Ycf12, peripheral proteins PsbO, CyanoQ (PsbQ), PsbU, PsbV and a large number of cofactors. It forms dimeric complexes. Requires heme b as cofactor.

It is found in the cellular thylakoid membrane. This b-type cytochrome is tightly associated with the reaction center of photosystem II (PSII). PSII is a light-driven water:plastoquinone oxidoreductase that uses light energy to abstract electrons from H(2)O, generating O(2) and a proton gradient subsequently used for ATP formation. It consists of a core antenna complex that captures photons, and an electron transfer chain that converts photonic excitation into a charge separation. The polypeptide is Cytochrome b559 subunit alpha (Prochlorococcus marinus (strain SARG / CCMP1375 / SS120)).